The sequence spans 562 residues: Chaperonin GroEL 1 (562 aa).

ATP-binding positions include 30-33, Lys51, 87-91, Gly415, 478-480, and Asp494; these read TLGP, DGTTT, and NAA.

It belongs to the chaperonin (HSP60) family. As to quaternary structure, forms a cylinder of 14 subunits composed of two heptameric rings stacked back-to-back. Interacts with the co-chaperonin GroES.

It is found in the cytoplasm. It carries out the reaction ATP + H2O + a folded polypeptide = ADP + phosphate + an unfolded polypeptide.. In terms of biological role, together with its co-chaperonin GroES, plays an essential role in assisting protein folding. The GroEL-GroES system forms a nano-cage that allows encapsulation of the non-native substrate proteins and provides a physical environment optimized to promote and accelerate protein folding. In Sorangium cellulosum (strain So ce56) (Polyangium cellulosum (strain So ce56)), this protein is Chaperonin GroEL 1.